An 86-amino-acid polypeptide reads, in one-letter code: Anti-adapter protein IraP (86 aa).

Positions Met-1 to Met-36 form a coiled coil.

Belongs to the IraP family. In terms of assembly, interacts with RssB.

The protein resides in the cytoplasm. Functionally, inhibits RpoS proteolysis by regulating RssB activity, thereby increasing the stability of the sigma stress factor RpoS especially during phosphate and magnesium starvation, but also in stationary phase and during nitrogen starvation. Its effect on RpoS stability is due to its interaction with RssB, which probably blocks the interaction of RssB with RpoS, and the consequent delivery of the RssB-RpoS complex to the ClpXP protein degradation pathway. In Salmonella choleraesuis (strain SC-B67), this protein is Anti-adapter protein IraP.